The sequence spans 504 residues: ATP synthase subunit alpha 2 (504 aa).

An ATP-binding site is contributed by 169–176; that stretch reads GDRQTGKT.

Belongs to the ATPase alpha/beta chains family. In terms of assembly, F-type ATPases have 2 components, CF(1) - the catalytic core - and CF(0) - the membrane proton channel. CF(1) has five subunits: alpha(3), beta(3), gamma(1), delta(1), epsilon(1). CF(0) has three main subunits: a(1), b(2) and c(9-12). The alpha and beta chains form an alternating ring which encloses part of the gamma chain. CF(1) is attached to CF(0) by a central stalk formed by the gamma and epsilon chains, while a peripheral stalk is formed by the delta and b chains.

Its subcellular location is the cell membrane. The catalysed reaction is ATP + H2O + 4 H(+)(in) = ADP + phosphate + 5 H(+)(out). In terms of biological role, produces ATP from ADP in the presence of a proton gradient across the membrane. The alpha chain is a regulatory subunit. The polypeptide is ATP synthase subunit alpha 2 (Listeria innocua serovar 6a (strain ATCC BAA-680 / CLIP 11262)).